The primary structure comprises 158 residues: Photosystem I assembly protein Ycf3 (158 aa).

TPR repeat units lie at residues alanine 35–valine 68, serine 72–leucine 105, and alanine 113–glutamine 146.

It belongs to the Ycf3 family.

Its subcellular location is the plastid. The protein localises to the chloroplast thylakoid membrane. Functionally, essential for the assembly of the photosystem I (PSI) complex. May act as a chaperone-like factor to guide the assembly of the PSI subunits. The sequence is that of Photosystem I assembly protein Ycf3 from Cyanidioschyzon merolae (strain NIES-3377 / 10D) (Unicellular red alga).